A 107-amino-acid polypeptide reads, in one-letter code: Large ribosomal subunit protein uL24 (107 aa).

The protein belongs to the universal ribosomal protein uL24 family. As to quaternary structure, part of the 50S ribosomal subunit.

Its function is as follows. One of two assembly initiator proteins, it binds directly to the 5'-end of the 23S rRNA, where it nucleates assembly of the 50S subunit. One of the proteins that surrounds the polypeptide exit tunnel on the outside of the subunit. The chain is Large ribosomal subunit protein uL24 from Thermotoga neapolitana (strain ATCC 49049 / DSM 4359 / NBRC 107923 / NS-E).